Here is an 82-residue protein sequence, read N- to C-terminus: uncharacterized protein (82 aa).

A run of 2 helical transmembrane segments spans residues Trp-22–Ala-39 and Leu-46–Ile-65.

It localises to the cell membrane. This is an uncharacterized protein from Bacillus subtilis (strain 168).